The primary structure comprises 80 residues: DNA-directed RNA polymerase subunit Rpo5 (80 aa).

It belongs to the archaeal Rpo5/eukaryotic RPB5 RNA polymerase subunit family. Part of the RNA polymerase complex.

It localises to the cytoplasm. It catalyses the reaction RNA(n) + a ribonucleoside 5'-triphosphate = RNA(n+1) + diphosphate. DNA-dependent RNA polymerase (RNAP) catalyzes the transcription of DNA into RNA using the four ribonucleoside triphosphates as substrates. The polypeptide is DNA-directed RNA polymerase subunit Rpo5 (Thermofilum pendens (strain DSM 2475 / Hrk 5)).